A 196-amino-acid polypeptide reads, in one-letter code: Urease accessory protein UreE (196 aa).

Positions 150–196 are disordered; sequence RGAYSGGHDHGHAHAHSHAEAHSHAHGESHSHSHSHSHDDHHHHDHD. The segment covering 156 to 196 has biased composition (basic and acidic residues); that stretch reads GHDHGHAHAHSHAEAHSHAHGESHSHSHSHSHDDHHHHDHD.

It belongs to the UreE family.

The protein resides in the cytoplasm. Its function is as follows. Involved in urease metallocenter assembly. Binds nickel. Probably functions as a nickel donor during metallocenter assembly. The chain is Urease accessory protein UreE from Mesorhizobium japonicum (strain LMG 29417 / CECT 9101 / MAFF 303099) (Mesorhizobium loti (strain MAFF 303099)).